The following is a 130-amino-acid chain: Small ribosomal subunit protein uS8 (130 aa).

The protein belongs to the universal ribosomal protein uS8 family. Part of the 30S ribosomal subunit. Contacts proteins S5 and S12.

Functionally, one of the primary rRNA binding proteins, it binds directly to 16S rRNA central domain where it helps coordinate assembly of the platform of the 30S subunit. This chain is Small ribosomal subunit protein uS8, found in Erwinia tasmaniensis (strain DSM 17950 / CFBP 7177 / CIP 109463 / NCPPB 4357 / Et1/99).